Here is a 148-residue protein sequence, read N- to C-terminus: SUMO-conjugating enzyme UBC9 (148 aa).

The UBC core domain maps to 1–147 (MASKRILKEL…ARTWTQKYAM (147 aa)). The active-site Glycyl thioester intermediate is the Cys85.

The protein belongs to the ubiquitin-conjugating enzyme family. In terms of assembly, interacts with CHIP. In terms of tissue distribution, highest expression in young stems and old leaves. Lowest levels in floral buds, anthers and young leaves.

The protein operates within protein modification; protein sumoylation. Accepts the ubiquitin-like protein SUMO/SMT3 from the E1 complex and catalyzes its covalent attachment to other proteins. Mediates the selective degradation of short-lived and abnormal proteins. The polypeptide is SUMO-conjugating enzyme UBC9 (UBC9) (Arabidopsis thaliana (Mouse-ear cress)).